The following is a 209-amino-acid chain: Large ribosomal subunit protein bL25 (209 aa).

A disordered region spans residues 183-209 (TAGERPAAEPAAAPGAAPAAGPEEAEE). The span at 184 to 209 (AGERPAAEPAAAPGAAPAAGPEEAEE) shows a compositional bias: low complexity.

The protein belongs to the bacterial ribosomal protein bL25 family. CTC subfamily. In terms of assembly, part of the 50S ribosomal subunit; part of the 5S rRNA/L5/L18/L25 subcomplex. Contacts the 5S rRNA. Binds to the 5S rRNA independently of L5 and L18.

Functionally, this is one of the proteins that binds to the 5S RNA in the ribosome where it forms part of the central protuberance. The sequence is that of Large ribosomal subunit protein bL25 from Pelotomaculum thermopropionicum (strain DSM 13744 / JCM 10971 / SI).